Reading from the N-terminus, the 290-residue chain is ATP synthase gamma chain (290 aa).

Belongs to the ATPase gamma chain family. As to quaternary structure, F-type ATPases have 2 components, CF(1) - the catalytic core - and CF(0) - the membrane proton channel. CF(1) has five subunits: alpha(3), beta(3), gamma(1), delta(1), epsilon(1). CF(0) has three main subunits: a, b and c.

Its subcellular location is the cell membrane. In terms of biological role, produces ATP from ADP in the presence of a proton gradient across the membrane. The gamma chain is believed to be important in regulating ATPase activity and the flow of protons through the CF(0) complex. In Rubrobacter xylanophilus (strain DSM 9941 / JCM 11954 / NBRC 16129 / PRD-1), this protein is ATP synthase gamma chain.